We begin with the raw amino-acid sequence, 113 residues long: Probable mesentericin-Y105 immunity protein (113 aa).

Belongs to the immunity protein EntA family.

Imparts immunity to mesentericin-Y105 to naturally sensitive host strains. This chain is Probable mesentericin-Y105 immunity protein (mesI), found in Leuconostoc mesenteroides.